Reading from the N-terminus, the 896-residue chain is Desmocollin-3 (896 aa).

A signal peptide spans Met-1 to Arg-27. A propeptide spanning residues Ala-28 to Arg-135 is cleaved from the precursor. Cadherin domains lie at Arg-136–Phe-243, Thr-244–Phe-355, Arg-356–Cys-471, Thr-472–Gln-579, and Glu-580–Lys-690. The Extracellular portion of the chain corresponds to Arg-136–Lys-690. N-linked (GlcNAc...) asparagine glycosylation occurs at Asn-166. N-linked (GlcNAc...) asparagine glycans are attached at residues Asn-392, Asn-546, and Asn-629. The chain crosses the membrane as a helical span at residues Trp-691 to Val-711. The Cytoplasmic portion of the chain corresponds to Cys-712–Arg-896.

May form homodimers. Interacts with DSG1; there is evidence to suggest that the interaction promotes cell-cell adhesion of keratinocytes. Expressed throughout the basal and spinous layer of the epidermis with weak expression in the granular layer (at protein level). Also expressed in the buccal mucosa, esophagus and cervix (at protein level).

Its subcellular location is the cell membrane. The protein resides in the cell junction. The protein localises to the desmosome. It is found in the cytoplasm. Functionally, a component of desmosome cell-cell junctions which are required for positive regulation of cellular adhesion. Required for cell-cell adhesion in the epidermis, as a result required for the maintenance of the dermal cohesion and the dermal barrier function. Required for cell-cell adhesion of epithelial cell layers surrounding the telogen hair club, as a result plays an important role in telogen hair shaft anchorage. Essential for successful completion of embryo compaction and embryo development. This is Desmocollin-3 (DSC3) from Homo sapiens (Human).